The following is a 255-amino-acid chain: Undecaprenyl-diphosphatase (255 aa).

6 consecutive transmembrane segments (helical) span residues 1–21, 75–95, 96–116, 174–194, 203–223, and 234–254; these read MDII…FLPI, IIIS…IVYQ, LFTV…FLIV, TEFS…FDIV, GDIS…LITI, and NFVP…MFFV.

The protein belongs to the UppP family.

It localises to the cell membrane. The enzyme catalyses di-trans,octa-cis-undecaprenyl diphosphate + H2O = di-trans,octa-cis-undecaprenyl phosphate + phosphate + H(+). Its function is as follows. Catalyzes the dephosphorylation of undecaprenyl diphosphate (UPP). The protein is Undecaprenyl-diphosphatase of Methanococcus aeolicus (strain ATCC BAA-1280 / DSM 17508 / OCM 812 / Nankai-3).